Here is a 904-residue protein sequence, read N- to C-terminus: Envelope glycoprotein B (904 aa).

The signal sequence occupies residues 1–22 (MRGGGLICALVVGALVAAVASA). The Virion surface portion of the chain corresponds to 23-771 (APAAPAAPRA…SGVSSFMSNP (749 aa)). Residues 40 to 83 (VAANGGPASRPPPVPSPATTKARKRKTKKPPKRPEATPPPDANA) form a disordered region. A compositionally biased stretch (basic residues) spans 60–70 (KARKRKTKKPP). 2 N-linked (GlcNAc...) asparagine; by host glycosylation sites follow: Asn-82 and Asn-136. 5 disulfides stabilise this stretch: Cys-111–Cys-570, Cys-128–Cys-526, Cys-202–Cys-266, Cys-359–Cys-407, and Cys-593–Cys-630. Involved in fusion and/or binding to host membrane regions lie at residues 168 to 174 (VWFGHRY) and 253 to 260 (RVEAFHRY). Asn-393, Asn-425, and Asn-486 each carry an N-linked (GlcNAc...) asparagine; by host glycan. Residues 467–490 (QDRKPRNATPAPLREAPSANASVE) are disordered. Residue Asn-671 is glycosylated (N-linked (GlcNAc...) asparagine; by host). Hydrophobic membrane proximal region stretches follow at residues 716-769 (IDTV…SFMS) and 728-768 (MFAG…SSFM). A helical membrane pass occupies residues 772–792 (FGALAVGLLVLAGLVAAFFAF). At 793–904 (RYVLQLQRNP…EDEAGDEDEL (112 aa)) the chain is on the intravirion side. A disordered region spans residues 816–835 (TSDPGGVGGEGEEGAEGGGF). The Golgi targeting motif lies at 849–852 (YMAL). The segment at 883–904 (KRNKARYSPLHNEDEAGDEDEL) is disordered. Positions 889-892 (YSPL) match the Internalization motif motif.

The protein belongs to the herpesviridae glycoprotein B family. Homotrimer; disulfide-linked. Binds to heparan sulfate proteoglycans. Interacts with gH/gL heterodimer.

It is found in the virion membrane. The protein localises to the host cell membrane. It localises to the host endosome membrane. Its subcellular location is the host Golgi apparatus membrane. Its function is as follows. Envelope glycoprotein that forms spikes at the surface of virion envelope. Essential for the initial attachment to heparan sulfate moieties of the host cell surface proteoglycans. Involved in fusion of viral and cellular membranes leading to virus entry into the host cell. Following initial binding to its host receptors, membrane fusion is mediated by the fusion machinery composed at least of gB and the heterodimer gH/gL. May be involved in the fusion between the virion envelope and the outer nuclear membrane during virion egress. The chain is Envelope glycoprotein B from Homo sapiens (Human).